The sequence spans 482 residues: MKFIIKLFPEITIKSKSVRQRFTKMLQGNIRNVLRRFDEDARVRMDWDKLVVSSRNDQFHAQYLETLACIPGIQYFLEVKLSNFTDLHDIFEQTRAVWGDRLKGKTFCVRARRVGKHDFSSLELERYVGGGLNQHCETAGVRLKKPDIQVNLEVENDELYIISAVHHGMGGFPMATQEDVLSLLSGGFDSGVASYQFIKRGCRVHYCFFNLGGAAHEIGVKQVAYYLWSKFGASHKVRFTAIDFEPVVAEILEKVDNGQMGVVLKRMMMRAAGQVADYFQIPALVTGECVGQVSSQTLTNLNVIDRVTDKVILRPLITWDKPDIISEARRIGTLEFAETMPEYCGVISKKPTIKAVLSNIEAEEANFDFAILDKVVSEARYLDIRRIGEETAAEVQEIETTEVLAADEVILDIRSADERDEKPLVVEGRDVLHIPFFKLATAFGDLPKEQTYLLYCDRGVMSKLQALYLKEKGFDNVKVYRP.

A THUMP domain is found at 61–165; the sequence is AQYLETLACI…NDELYIISAV (105 aa). ATP-binding positions include 183 to 184, Lys-265, Gly-287, and Gln-296; that span reads LL. Cysteines 344 and 456 form a disulfide. Residues 404–482 form the Rhodanese domain; that stretch reads LAADEVILDI…GFDNVKVYRP (79 aa). Cys-456 functions as the Cysteine persulfide intermediate in the catalytic mechanism.

It belongs to the ThiI family.

Its subcellular location is the cytoplasm. The enzyme catalyses [ThiI sulfur-carrier protein]-S-sulfanyl-L-cysteine + a uridine in tRNA + 2 reduced [2Fe-2S]-[ferredoxin] + ATP + H(+) = [ThiI sulfur-carrier protein]-L-cysteine + a 4-thiouridine in tRNA + 2 oxidized [2Fe-2S]-[ferredoxin] + AMP + diphosphate. The catalysed reaction is [ThiS sulfur-carrier protein]-C-terminal Gly-Gly-AMP + S-sulfanyl-L-cysteinyl-[cysteine desulfurase] + AH2 = [ThiS sulfur-carrier protein]-C-terminal-Gly-aminoethanethioate + L-cysteinyl-[cysteine desulfurase] + A + AMP + 2 H(+). Its pathway is cofactor biosynthesis; thiamine diphosphate biosynthesis. Functionally, catalyzes the ATP-dependent transfer of a sulfur to tRNA to produce 4-thiouridine in position 8 of tRNAs, which functions as a near-UV photosensor. Also catalyzes the transfer of sulfur to the sulfur carrier protein ThiS, forming ThiS-thiocarboxylate. This is a step in the synthesis of thiazole, in the thiamine biosynthesis pathway. The sulfur is donated as persulfide by IscS. In Aeromonas salmonicida (strain A449), this protein is tRNA sulfurtransferase.